Here is a 537-residue protein sequence, read N- to C-terminus: Probable protein kinase UbiB (537 aa).

A helical membrane pass occupies residues 24 to 44 (LLFEQPLLPWWLASLRLLMPW). The region spanning 126–494 (RFDVEPLASA…RRRQGDNWAL (369 aa)) is the Protein kinase domain. Residues 132–140 (LASASVAQV) and Lys154 contribute to the ATP site. Asp289 functions as the Proton acceptor in the catalytic mechanism. Helical transmembrane passes span 493-513 (ALRLLGAGLLGGGATLAAGAV) and 515-535 (LSAPAAWPAWLMLAAGLYLIV).

This sequence belongs to the ABC1 family. UbiB subfamily.

It localises to the cell inner membrane. It functions in the pathway cofactor biosynthesis; ubiquinone biosynthesis [regulation]. Its function is as follows. Is probably a protein kinase regulator of UbiI activity which is involved in aerobic coenzyme Q (ubiquinone) biosynthesis. The protein is Probable protein kinase UbiB of Pseudomonas entomophila (strain L48).